Here is a 95-residue protein sequence, read N- to C-terminus: Small ribosomal subunit protein bS6 (95 aa).

The protein belongs to the bacterial ribosomal protein bS6 family.

Binds together with bS18 to 16S ribosomal RNA. In Exiguobacterium sibiricum (strain DSM 17290 / CCUG 55495 / CIP 109462 / JCM 13490 / 255-15), this protein is Small ribosomal subunit protein bS6.